The chain runs to 215 residues: Putative serine/threonine-protein kinase YrzF (215 aa).

The Protein kinase domain occupies 27–215 (SEELTLIGKG…HFAQRKRKYS (189 aa)). Residues 33-41 (IGKGRSAYV) and Lys54 each bind ATP. Residue Asp135 is the Proton acceptor of the active site.

This sequence belongs to the protein kinase superfamily. Ser/Thr protein kinase family.

The enzyme catalyses L-seryl-[protein] + ATP = O-phospho-L-seryl-[protein] + ADP + H(+). It catalyses the reaction L-threonyl-[protein] + ATP = O-phospho-L-threonyl-[protein] + ADP + H(+). The chain is Putative serine/threonine-protein kinase YrzF (yrzF) from Bacillus subtilis (strain 168).